The following is a 455-amino-acid chain: Bifunctional protein GlmU (455 aa).

The interval 1–226 (MGLSVVILAA…EFEILGVNDR (226 aa)) is pyrophosphorylase. UDP-N-acetyl-alpha-D-glucosamine-binding positions include 8–11 (LAAG), K22, Q73, 78–79 (GT), 99–101 (YGD), G136, E151, N166, and N224. D101 is a Mg(2+) binding site. N224 contributes to the Mg(2+) binding site. The interval 227-247 (TQLASLERVWQRNVAEKIMAK) is linker. Residues 248-455 (GVSIADPNRF…WQRSVKKTDK (208 aa)) form an N-acetyltransferase region. UDP-N-acetyl-alpha-D-glucosamine contacts are provided by R330 and K348. The active-site Proton acceptor is H360. Y363 and N374 together coordinate UDP-N-acetyl-alpha-D-glucosamine. Acetyl-CoA contacts are provided by residues A377, 383–384 (NY), S402, A420, and R437.

In the N-terminal section; belongs to the N-acetylglucosamine-1-phosphate uridyltransferase family. It in the C-terminal section; belongs to the transferase hexapeptide repeat family. As to quaternary structure, homotrimer. Requires Mg(2+) as cofactor.

It is found in the cytoplasm. It carries out the reaction alpha-D-glucosamine 1-phosphate + acetyl-CoA = N-acetyl-alpha-D-glucosamine 1-phosphate + CoA + H(+). The catalysed reaction is N-acetyl-alpha-D-glucosamine 1-phosphate + UTP + H(+) = UDP-N-acetyl-alpha-D-glucosamine + diphosphate. It functions in the pathway nucleotide-sugar biosynthesis; UDP-N-acetyl-alpha-D-glucosamine biosynthesis; N-acetyl-alpha-D-glucosamine 1-phosphate from alpha-D-glucosamine 6-phosphate (route II): step 2/2. The protein operates within nucleotide-sugar biosynthesis; UDP-N-acetyl-alpha-D-glucosamine biosynthesis; UDP-N-acetyl-alpha-D-glucosamine from N-acetyl-alpha-D-glucosamine 1-phosphate: step 1/1. It participates in bacterial outer membrane biogenesis; LPS lipid A biosynthesis. Its function is as follows. Catalyzes the last two sequential reactions in the de novo biosynthetic pathway for UDP-N-acetylglucosamine (UDP-GlcNAc). The C-terminal domain catalyzes the transfer of acetyl group from acetyl coenzyme A to glucosamine-1-phosphate (GlcN-1-P) to produce N-acetylglucosamine-1-phosphate (GlcNAc-1-P), which is converted into UDP-GlcNAc by the transfer of uridine 5-monophosphate (from uridine 5-triphosphate), a reaction catalyzed by the N-terminal domain. The protein is Bifunctional protein GlmU of Francisella tularensis subsp. tularensis (strain SCHU S4 / Schu 4).